Consider the following 85-residue polypeptide: Alpha-mammal toxin AaH2 (85 aa).

The N-terminal stretch at 1–19 is a signal peptide; sequence MNYLVMISLALLFVTGVES. An LCN-type CS-alpha/beta domain is found at 21-83; the sequence is KDGYIVDDVN…VRTKGPGRCH (63 aa). 4 disulfides stabilise this stretch: C31/C82, C35/C55, C41/C65, and C45/C67. Position 83 is a histidine amide (H83).

Belongs to the long (4 C-C) scorpion toxin superfamily. Sodium channel inhibitor family. Alpha subfamily. Post-translationally, the amidation of His-83 is not necessary for toxicity. In terms of tissue distribution, expressed by the venom gland.

The protein localises to the secreted. Alpha toxin that binds voltage-independently at site-3 of sodium channels (Nav), inhibits the inactivation of the activated channels, and weakly inhibits activation, thereby blocking neuronal transmission. Inserts into voltage-sensing domain IV to stabilize a deactivated state, thereby preventing fast-inactivation. Principally slows the inactivation process of TTX-sensitive sodium channels. It is active on mammalian brain Nav1.2/SCN2A (EC(50)human=0.72 nM, EC(50)rat=2.6 nM), on rat skeletal muscle Nav1.4/SCN4A (EC(50)=2.2 nM), and on human neuronal Nav1.7/SCN9A (EC(50)=6.8-51.7 nM). In vivo, intraplantar injection into mice induces spontaneous pain responses. The chain is Alpha-mammal toxin AaH2 from Androctonus australis (Sahara scorpion).